A 159-amino-acid polypeptide reads, in one-letter code: Cyclic pyranopterin monophosphate synthase (159 aa).

Residues 75-77 (LCH) and 113-114 (ME) each bind substrate. The active site involves Asp128.

Belongs to the MoaC family. Homohexamer; trimer of dimers.

The catalysed reaction is (8S)-3',8-cyclo-7,8-dihydroguanosine 5'-triphosphate = cyclic pyranopterin phosphate + diphosphate. It functions in the pathway cofactor biosynthesis; molybdopterin biosynthesis. Catalyzes the conversion of (8S)-3',8-cyclo-7,8-dihydroguanosine 5'-triphosphate to cyclic pyranopterin monophosphate (cPMP). This is Cyclic pyranopterin monophosphate synthase from Burkholderia multivorans (strain ATCC 17616 / 249).